A 511-amino-acid chain; its full sequence is Cytochrome P450 76C4 (511 aa).

Residues 3 to 23 (IISGQALFLLFCFISSCFLIS) form a helical membrane-spanning segment. Cys450 contributes to the heme binding site.

This sequence belongs to the cytochrome P450 family. Heme is required as a cofactor.

It is found in the membrane. The sequence is that of Cytochrome P450 76C4 (CYP76C4) from Arabidopsis thaliana (Mouse-ear cress).